Reading from the N-terminus, the 534-residue chain is Low affinity inorganic phosphate transporter 1 (534 aa).

The Cytoplasmic segment spans residues 1 to 23 (MAKDLQVLTALDVAKTQLYHFTA). The chain crosses the membrane as a helical span at residues 24–44 (IVIAGMGFFTDAYDLFCISLV). Residues 45–69 (TKLLGRIYYHHEGALKPGSLPPNVA) lie on the Extracellular side of the membrane. Residues 70 to 90 (AAVNGVAFCGTLAGQLFFGWL) form a helical membrane-spanning segment. At 91–98 (GDKLGRKK) the chain is on the cytoplasmic side. A helical transmembrane segment spans residues 99 to 119 (VYGMTLMLMVICSIASGLSFG). Residues 120-124 (HTPKS) lie on the Extracellular side of the membrane. A helical transmembrane segment spans residues 125–145 (VMATLCFFRFWLGFGIGGDYP). Residues 146–163 (LSATIMSEYANKKTRGAF) are Cytoplasmic-facing. The chain crosses the membrane as a helical span at residues 164 to 184 (IAAVFAMQGFGILAGGMVAII). The Extracellular segment spans residues 185–210 (VSAAFKNQFPAPAYKDGALASTISQA). Residues 211–231 (DFVWRIIVMFGAIPTALTYYW) traverse the membrane as a helical segment. The Cytoplasmic segment spans residues 232 to 290 (RMKMPETARYTALVAKNLKQATNDMSKVLQVEIEPEQEKVEEISQGNDFGLFTKQFLRR). A helical transmembrane segment spans residues 291-311 (HGLHLLGTASTWFLLDIAFYS). Residues 312-343 (QNLFQKDIFSAIGWIPPAETMNALEEVYRIAR) lie on the Extracellular side of the membrane. A helical transmembrane segment spans residues 344–364 (AQTLIALCSTVPGYWFTVAFI). At 365–369 (DKIGR) the chain is on the cytoplasmic side. A helical membrane pass occupies residues 370–390 (FAIQLMGFFFMTVFMFALAIP). At 391–400 (YTHWTHKDNR) the chain is on the extracellular side. Residues 401–421 (IGFVIMYSLTFFFANFGPNAT) form a helical membrane-spanning segment. Topologically, residues 422 to 440 (TFVVPAEIFPARLRSTCHG) are cytoplasmic. A helical transmembrane segment spans residues 441-461 (ISAAAGKAGAMVGAFGFLYAA). Residues 462–481 (QSTDPKKTDAGYPAGIGVRN) lie on the Extracellular side of the membrane. Residues 482-502 (SLIVLGCVNFLGMLFTLLVPE) traverse the membrane as a helical segment. Topologically, residues 503 to 534 (SKGKSLEEMSRENEGEDENGTEMRASGRTVPV) are cytoplasmic. A disordered region spans residues 507 to 534 (SLEEMSRENEGEDENGTEMRASGRTVPV).

It belongs to the major facilitator superfamily. Phosphate:H(+) symporter (TC 2.A.1.9) family.

It localises to the cell membrane. It carries out the reaction phosphate(in) + H(+)(in) = phosphate(out) + H(+)(out). Its function is as follows. Low-affinity transporter for external inorganic phosphate (Pi). Involved in phosphorus (P) remobilization from dying to developing tissues during corolla senescence in an ethylene-dependent manner. The protein is Low affinity inorganic phosphate transporter 1 of Petunia hybrida (Petunia).